A 695-amino-acid chain; its full sequence is Threonine--tRNA ligase (695 aa).

A TGS domain is found at 1–76 (MPRIPSPPQA…TTTDVVEPVT (76 aa)). Positions 279 to 585 (DHRKLGVELD…LLEHHAGAFP (307 aa)) are catalytic. Residues Cys-384, His-435, and His-562 each coordinate Zn(2+).

The protein belongs to the class-II aminoacyl-tRNA synthetase family. In terms of assembly, homodimer. Zn(2+) is required as a cofactor.

The protein localises to the cytoplasm. The enzyme catalyses tRNA(Thr) + L-threonine + ATP = L-threonyl-tRNA(Thr) + AMP + diphosphate + H(+). In terms of biological role, catalyzes the attachment of threonine to tRNA(Thr) in a two-step reaction: L-threonine is first activated by ATP to form Thr-AMP and then transferred to the acceptor end of tRNA(Thr). Also edits incorrectly charged L-seryl-tRNA(Thr). In Leifsonia xyli subsp. xyli (strain CTCB07), this protein is Threonine--tRNA ligase.